We begin with the raw amino-acid sequence, 667 residues long: Transmembrane 9 superfamily member 1 (667 aa).

The signal sequence occupies residues 1 to 22; that stretch reads MIYKMAHVQLLLLYFFVSTVKA. At 23–302 the chain is on the lumenal side; it reads FYLPGVAPTT…DKYLHVYDPS (280 aa). Residues N61 and N282 are each glycosylated (N-linked (GlcNAc...) asparagine). The helical transmembrane segment at 303 to 323 threads the bilayer; it reads IQWFSLINFSLVVVLLSSVVI. The Cytoplasmic segment spans residues 324-370; that stretch reads HSLLRALKSDFARYNELNLDDDFQEDSGWKLNHGDVFRSPSQSLTLS. The helical transmembrane segment at 371–391 threads the bilayer; the sequence is ILVGSGVQLFLMVTCSIFFAA. Over 392-405 the chain is Lumenal; that stretch reads LGFLSPSSRGSLAT. A helical membrane pass occupies residues 406-426; sequence VMFILYALFGFVGSYTSMGIY. At 427–442 the chain is on the cytoplasmic side; that stretch reads KFFNGPYWKANLILTP. Residues 443–463 form a helical membrane-spanning segment; sequence LLVPGAILLIIIALNFFLMFV. At 464-474 the chain is on the lumenal side; the sequence is HSSGVIPASTL. A helical transmembrane segment spans residues 475-495; that stretch reads FFMVFLWFLFSIPLSFAGSLI. Residues 496–527 lie on the Cytoplasmic side of the membrane; the sequence is ARKRCHWDEHPTKTNQIARQIPFQPWYLKTIP. A helical membrane pass occupies residues 528-548; that stretch reads ATLIAGIFPFGSIAVELYFIY. Over 549–560 the chain is Lumenal; sequence TSLWFNKIFYMF. Residues 561 to 581 form a helical membrane-spanning segment; it reads GFLFFSFLLLTLTSSLVTILI. At 582 to 596 the chain is on the cytoplasmic side; it reads TYHSLCLENWKWQWR. A helical transmembrane segment spans residues 597–617; the sequence is GFIIGGAGCALYVFIHSILFT. The Lumenal segment spans residues 618 to 635; that stretch reads KFKLGGFTTIVLYVGYSS. A helical membrane pass occupies residues 636 to 656; it reads VISLLCCLVTGSIGFISSMLF. Residues 657–667 lie on the Cytoplasmic side of the membrane; it reads VRKIYSSIKVD.

It belongs to the nonaspanin (TM9SF) (TC 9.A.2) family.

Its subcellular location is the endosome membrane. It localises to the vacuole membrane. Functionally, with TMN2 and TMN3, plays a critical role in the late stages of a nutrient-controlled pathway notably regulating FLO11 gene expression. Acts downstream of RAS2 and TOR. Essential for cell adhesion and filamentous growth. May play a role as effector of cellular copper homeostasis. The polypeptide is Transmembrane 9 superfamily member 1 (EMP70) (Saccharomyces cerevisiae (strain ATCC 204508 / S288c) (Baker's yeast)).